The chain runs to 372 residues: Glutamate 5-kinase (372 aa).

Residue lysine 9 participates in ATP binding. Substrate contacts are provided by serine 49, aspartate 136, and asparagine 148. Residues 168-169 (TD) and 210-216 (TGGMKSK) each bind ATP. In terms of domain architecture, PUA spans 276–360 (EGKVFIDDGA…PAIEVIHRDS (85 aa)).

The protein belongs to the glutamate 5-kinase family.

It is found in the cytoplasm. The enzyme catalyses L-glutamate + ATP = L-glutamyl 5-phosphate + ADP. It participates in amino-acid biosynthesis; L-proline biosynthesis; L-glutamate 5-semialdehyde from L-glutamate: step 1/2. Functionally, catalyzes the transfer of a phosphate group to glutamate to form L-glutamate 5-phosphate. This chain is Glutamate 5-kinase, found in Oceanobacillus iheyensis (strain DSM 14371 / CIP 107618 / JCM 11309 / KCTC 3954 / HTE831).